Reading from the N-terminus, the 360-residue chain is POU domain, class 5, transcription factor 1 (360 aa).

Disordered regions lie at residues 1 to 48 and 86 to 137; these read MAGH…SGIG and PPGG…EESQ. Positions 4–12 match the 9aaTAD motif; sequence HLASDFAFS. A Phosphoserine; by MAPK modification is found at Ser-111. Residue Lys-123 forms a Glycyl lysine isopeptide (Lys-Gly) (interchain with G-Cter in SUMO) linkage. Residues 123-137 show a composition bias toward basic and acidic residues; sequence KLDKEKLEPNPEESQ. One can recognise a POU-specific domain in the interval 138-212; sequence DIKALQKDLE…LLQKWVEEAD (75 aa). 2 residues coordinate DNA: Arg-157 and Gln-164. DNA-binding regions lie at residues 180-186 and 193-196; these read SQTTICR and SFKN. Positions 230–289 form a DNA-binding region, homeobox; it reads RKRKRTSIENRVRGNLESMFLQCPKPTLQQISHIAQQLGLEKDVVRVWFCNRRQKGKRSS. Phosphothreonine is present on Thr-235. Phosphoserine occurs at positions 236, 289, 290, and 355. Residues 287-322 form a disordered region; sequence RSSSDYSQREDFEAAGSPFTGGPVSSPLAPGPHFGT.

This sequence belongs to the POU transcription factor family. Class-5 subfamily. Interacts with PKM. Interacts with WWP2. Interacts with UBE2I and ZSCAN10. Interacts with PCGF1. Interacts with ESRRB; recruits ESRRB near the POU5F1-SOX2 element in the NANOG proximal promoter; the interaction is DNA independent. Interacts with MAPK8 and MAPK9; the interaction allows MAPK8 and MAPK9 to phosphorylate POU5F1 on Ser-355. Interacts (when phosphorylated on Ser-355) with FBXW8. Interacts with FBXW4. Interacts with SOX2 and SOX15; binds synergistically with either SOX2 or SOX15 to DNA. Interacts with DDX56. In terms of processing, sumoylation enhances the protein stability, DNA binding and transactivation activity. Sumoylation is required for enhanced YES1 expression. Post-translationally, ubiquitinated; undergoes 'Lys-63'-linked polyubiquitination by WWP2 leading to proteasomal degradation. ERK1/2-mediated phosphorylation at Ser-111 promotes nuclear exclusion and proteasomal degradation. Phosphorylation at Thr-235 and Ser-236 decrease DNA-binding and alters ability to activate transcription. As to expression, expressed in immature oocytes.

The protein localises to the cytoplasm. It localises to the nucleus. In terms of biological role, transcription factor that binds to the octamer motif (5'-ATTTGCAT-3'). Forms a trimeric complex with SOX2 or SOX15 on DNA and controls the expression of a number of genes involved in embryonic development such as YES1, FGF4, UTF1 and ZFP206. Critical for early embryogenesis and for embryonic stem cell pluripotency. The sequence is that of POU domain, class 5, transcription factor 1 (POU5F1) from Bos taurus (Bovine).